Consider the following 280-residue polypeptide: Pantothenate synthetase (280 aa).

30 to 37 (MGYLHEGH) lines the ATP pocket. The active-site Proton donor is the H37. Q61 is a binding site for (R)-pantoate. Beta-alanine is bound at residue Q61. 147–150 (GQKD) lines the ATP pocket. A (R)-pantoate-binding site is contributed by Q153. ATP is bound by residues V176 and 184-187 (MSSR).

Belongs to the pantothenate synthetase family. As to quaternary structure, homodimer.

It localises to the cytoplasm. It catalyses the reaction (R)-pantoate + beta-alanine + ATP = (R)-pantothenate + AMP + diphosphate + H(+). It functions in the pathway cofactor biosynthesis; (R)-pantothenate biosynthesis; (R)-pantothenate from (R)-pantoate and beta-alanine: step 1/1. Functionally, catalyzes the condensation of pantoate with beta-alanine in an ATP-dependent reaction via a pantoyl-adenylate intermediate. This is Pantothenate synthetase from Thermosipho melanesiensis (strain DSM 12029 / CIP 104789 / BI429).